The primary structure comprises 190 residues: Hypoxanthine/guanine phosphoribosyltransferase (190 aa).

It belongs to the purine/pyrimidine phosphoribosyltransferase family. Archaeal HPRT subfamily. Homodimer.

It is found in the cytoplasm. It catalyses the reaction IMP + diphosphate = hypoxanthine + 5-phospho-alpha-D-ribose 1-diphosphate. The catalysed reaction is GMP + diphosphate = guanine + 5-phospho-alpha-D-ribose 1-diphosphate. It participates in purine metabolism; IMP biosynthesis via salvage pathway; IMP from hypoxanthine: step 1/1. In terms of biological role, catalyzes a salvage reaction resulting in the formation of IMP that is energically less costly than de novo synthesis. This is Hypoxanthine/guanine phosphoribosyltransferase from Methanohalophilus mahii (strain ATCC 35705 / DSM 5219 / SLP).